We begin with the raw amino-acid sequence, 81 residues long: Cytochrome b559 subunit alpha (81 aa).

The helical transmembrane segment at 21-35 (VIHSITIPMLFIAGW) threads the bilayer. Residue H23 coordinates heme.

It belongs to the PsbE/PsbF family. Heterodimer of an alpha subunit and a beta subunit. PSII is composed of 1 copy each of membrane proteins PsbA, PsbB, PsbC, PsbD, PsbE, PsbF, PsbH, PsbI, PsbJ, PsbK, PsbL, PsbM, PsbT, PsbX, PsbY, PsbZ, Psb30/Ycf12, peripheral proteins PsbO, CyanoQ (PsbQ), PsbU, PsbV and a large number of cofactors. It forms dimeric complexes. The cofactor is heme b.

It localises to the cellular thylakoid membrane. Functionally, this b-type cytochrome is tightly associated with the reaction center of photosystem II (PSII). PSII is a light-driven water:plastoquinone oxidoreductase that uses light energy to abstract electrons from H(2)O, generating O(2) and a proton gradient subsequently used for ATP formation. It consists of a core antenna complex that captures photons, and an electron transfer chain that converts photonic excitation into a charge separation. This chain is Cytochrome b559 subunit alpha, found in Crocosphaera subtropica (strain ATCC 51142 / BH68) (Cyanothece sp. (strain ATCC 51142)).